A 232-amino-acid chain; its full sequence is 5'-methylthioadenosine/S-adenosylhomocysteine nucleosidase (232 aa).

Catalysis depends on Glu12, which acts as the Proton acceptor. Substrate is bound by residues Gly78, Ile152, and 173–174 (ME). The active-site Proton donor is Asp197.

This sequence belongs to the PNP/UDP phosphorylase family. MtnN subfamily. In terms of assembly, homodimer.

The enzyme catalyses S-adenosyl-L-homocysteine + H2O = S-(5-deoxy-D-ribos-5-yl)-L-homocysteine + adenine. It carries out the reaction S-methyl-5'-thioadenosine + H2O = 5-(methylsulfanyl)-D-ribose + adenine. It catalyses the reaction 5'-deoxyadenosine + H2O = 5-deoxy-D-ribose + adenine. It participates in amino-acid biosynthesis; L-methionine biosynthesis via salvage pathway; S-methyl-5-thio-alpha-D-ribose 1-phosphate from S-methyl-5'-thioadenosine (hydrolase route): step 1/2. Its function is as follows. Catalyzes the irreversible cleavage of the glycosidic bond in both 5'-methylthioadenosine (MTA) and S-adenosylhomocysteine (SAH/AdoHcy) to adenine and the corresponding thioribose, 5'-methylthioribose and S-ribosylhomocysteine, respectively. Also cleaves 5'-deoxyadenosine, a toxic by-product of radical S-adenosylmethionine (SAM) enzymes, into 5-deoxyribose and adenine. Thus, is required for in vivo function of the radical SAM enzymes biotin synthase and lipoic acid synthase, that are inhibited by 5'-deoxyadenosine accumulation. This is 5'-methylthioadenosine/S-adenosylhomocysteine nucleosidase from Escherichia coli O9:H4 (strain HS).